The following is a 339-amino-acid chain: Biotin synthase (339 aa).

Residues 51-278 (SEVELATLLS…KARVRLSAGR (228 aa)) form the Radical SAM core domain. 3 residues coordinate [4Fe-4S] cluster: C66, C70, and C73. Residues C110, C141, C201, and R273 each contribute to the [2Fe-2S] cluster site.

This sequence belongs to the radical SAM superfamily. Biotin synthase family. Homodimer. It depends on [4Fe-4S] cluster as a cofactor. Requires [2Fe-2S] cluster as cofactor.

It carries out the reaction (4R,5S)-dethiobiotin + (sulfur carrier)-SH + 2 reduced [2Fe-2S]-[ferredoxin] + 2 S-adenosyl-L-methionine = (sulfur carrier)-H + biotin + 2 5'-deoxyadenosine + 2 L-methionine + 2 oxidized [2Fe-2S]-[ferredoxin]. The protein operates within cofactor biosynthesis; biotin biosynthesis; biotin from 7,8-diaminononanoate: step 2/2. Functionally, catalyzes the conversion of dethiobiotin (DTB) to biotin by the insertion of a sulfur atom into dethiobiotin via a radical-based mechanism. The sequence is that of Biotin synthase from Herminiimonas arsenicoxydans.